The sequence spans 309 residues: Homoserine O-succinyltransferase (309 aa).

Cysteine 142 (acyl-thioester intermediate) is an active-site residue. The substrate site is built by lysine 163 and serine 192. The active-site Proton acceptor is histidine 235. The active site involves glutamate 237. A substrate-binding site is contributed by arginine 249.

This sequence belongs to the MetA family. As to quaternary structure, homodimer.

It is found in the cytoplasm. The enzyme catalyses L-homoserine + succinyl-CoA = O-succinyl-L-homoserine + CoA. Its pathway is amino-acid biosynthesis; L-methionine biosynthesis via de novo pathway; O-succinyl-L-homoserine from L-homoserine: step 1/1. In terms of biological role, transfers a succinyl group from succinyl-CoA to L-homoserine, forming succinyl-L-homoserine. This Escherichia coli (strain SE11) protein is Homoserine O-succinyltransferase.